A 489-amino-acid polypeptide reads, in one-letter code: Arginine biosynthesis bifunctional protein ArgJ 2, mitochondrial (489 aa).

The N-terminal 11 residues, methionine 1–histidine 11, are a transit peptide targeting the mitochondrion. Residues threonine 205, lysine 234, threonine 245, glutamate 341, and asparagine 484 each contribute to the substrate site. The Nucleophile role is filled by threonine 245.

This sequence belongs to the ArgJ family. As to quaternary structure, heterodimer of an alpha and a beta chain. Post-translationally, the alpha and beta chains are autoproteolytically processed from a single precursor protein within the mitochondrion.

It localises to the mitochondrion matrix. It catalyses the reaction N(2)-acetyl-L-ornithine + L-glutamate = N-acetyl-L-glutamate + L-ornithine. It carries out the reaction L-glutamate + acetyl-CoA = N-acetyl-L-glutamate + CoA + H(+). The protein operates within amino-acid biosynthesis; L-arginine biosynthesis; L-ornithine and N-acetyl-L-glutamate from L-glutamate and N(2)-acetyl-L-ornithine (cyclic): step 1/1. It functions in the pathway amino-acid biosynthesis; L-arginine biosynthesis; N(2)-acetyl-L-ornithine from L-glutamate: step 1/4. In terms of biological role, catalyzes two activities which are involved in the cyclic version of arginine biosynthesis: the synthesis of acetylglutamate from glutamate and acetyl-CoA, and of ornithine by transacetylation between acetylornithine and glutamate. The protein is Arginine biosynthesis bifunctional protein ArgJ 2, mitochondrial of Sclerotinia sclerotiorum (strain ATCC 18683 / 1980 / Ss-1) (White mold).